The following is a 269-amino-acid chain: 5'-nucleotidase SurE (269 aa).

Positions 8, 9, 40, and 93 each coordinate a divalent metal cation.

It belongs to the SurE nucleotidase family. Requires a divalent metal cation as cofactor.

The protein resides in the cytoplasm. It catalyses the reaction a ribonucleoside 5'-phosphate + H2O = a ribonucleoside + phosphate. In terms of biological role, nucleotidase that shows phosphatase activity on nucleoside 5'-monophosphates. This chain is 5'-nucleotidase SurE, found in Caulobacter sp. (strain K31).